Consider the following 429-residue polypeptide: Esterase/beta-lactamase LipL (429 aa).

Ser-88 serves as the catalytic Acyl-ester intermediate.

This sequence belongs to the beta-lactamase family.

The protein resides in the secreted. Its subcellular location is the cell wall. It localises to the cell membrane. The catalysed reaction is a fatty acid ester + H2O = an aliphatic alcohol + a fatty acid + H(+). The enzyme catalyses an acetyl ester + H2O = an aliphatic alcohol + acetate + H(+). It catalyses the reaction a butanoate ester + H2O = an aliphatic alcohol + butanoate + H(+). It carries out the reaction an octanoate ester + H2O = an aliphatic alcohol + octanoate + H(+). The catalysed reaction is decanoate ester + H2O = decanoate + an aliphatic alcohol + H(+). The enzyme catalyses a dodecanoate ester + H2O = an aliphatic alcohol + dodecanoate + H(+). It catalyses the reaction a tetradecanoate ester + H2O = an aliphatic alcohol + tetradecanoate + H(+). It carries out the reaction hexadecanoate ester + H2O = an aliphatic alcohol + hexadecanoate + H(+). The catalysed reaction is octadecanoate ester + H2O = an aliphatic alcohol + octadecanoate + H(+). The enzyme catalyses a hexanoate ester + H2O = an aliphatic alcohol + hexanoate + H(+). It catalyses the reaction a beta-lactam + H2O = a substituted beta-amino acid. Esterase and beta-lactamase activities are inhibited by the active site residue modifiers phenylmethanesulfonylflouride (PMSF) and diethylpyrocarbonate (DEPC). Functionally, shows both esterase and beta-lactamase activities, with a much higher activity against phenyl esters than against beta-lactams. Shows esterase activity against both long-chain and short-chain p-nitrophenol (pNP) esters, with a preference for shorter chain esters. Hydrolyzes substrates containing beta-lactam ring such as nitrocefin and ampicillin. Functions as an immunogen that activates both humoral and cell-mediated responses. In Mycobacterium tuberculosis (strain ATCC 25618 / H37Rv), this protein is Esterase/beta-lactamase LipL.